We begin with the raw amino-acid sequence, 103 residues long: uncharacterized protein (103 aa).

Disordered stretches follow at residues 1-20 (MIEL…WPKG) and 44-71 (LERM…HHLG). Residues 1–34 (MIELSYAPDVAGRRSNWPKGSGVNTWTAIRWTFA) form the signal peptide.

This is an uncharacterized protein from Mycobacterium tuberculosis (strain CDC 1551 / Oshkosh).